The following is a 453-amino-acid chain: Homogentisate 1,2-dioxygenase (453 aa).

Catalysis depends on His-306, which acts as the Proton acceptor. His-349 and Glu-355 together coordinate Fe cation. Homogentisate contacts are provided by Tyr-364 and His-385. Fe cation is bound at residue His-385.

The protein belongs to the homogentisate dioxygenase family. In terms of assembly, hexamer; dimer of trimers. Requires Fe cation as cofactor.

It carries out the reaction homogentisate + O2 = 4-maleylacetoacetate + H(+). The protein operates within amino-acid degradation; L-phenylalanine degradation; acetoacetate and fumarate from L-phenylalanine: step 4/6. In terms of biological role, involved in the catabolism of homogentisate (2,5-dihydroxyphenylacetate or 2,5-OH-PhAc), a central intermediate in the degradation of phenylalanine and tyrosine. Catalyzes the oxidative ring cleavage of the aromatic ring of homogentisate to yield maleylacetoacetate. The polypeptide is Homogentisate 1,2-dioxygenase (Rhizobium etli (strain ATCC 51251 / DSM 11541 / JCM 21823 / NBRC 15573 / CFN 42)).